Consider the following 104-residue polypeptide: Large ribosomal subunit protein uL24 (104 aa).

The protein belongs to the universal ribosomal protein uL24 family. In terms of assembly, part of the 50S ribosomal subunit.

In terms of biological role, one of two assembly initiator proteins, it binds directly to the 5'-end of the 23S rRNA, where it nucleates assembly of the 50S subunit. One of the proteins that surrounds the polypeptide exit tunnel on the outside of the subunit. This Yersinia enterocolitica serotype O:8 / biotype 1B (strain NCTC 13174 / 8081) protein is Large ribosomal subunit protein uL24.